Here is a 350-residue protein sequence, read N- to C-terminus: C-X-C chemokine receptor type 1 (350 aa).

Residues 1–39 lie on the Extracellular side of the membrane; sequence MSNITDPQMWDFDDLNFTGMPPADEDYSPCMLETETLNK. N-linked (GlcNAc...) asparagine glycosylation is found at asparagine 3 and asparagine 16. A helical transmembrane segment spans residues 40-66; that stretch reads YVVIIAYALVFLLSLLGNSLVMLVILY. Residues 67 to 75 lie on the Cytoplasmic side of the membrane; that stretch reads SRVGRSVTD. A helical membrane pass occupies residues 76–96; it reads VYLLNLALADLLFALTLPIWA. Residues 97 to 111 lie on the Extracellular side of the membrane; it reads ASKVNGWIFGTFLCK. Cysteine 110 and cysteine 187 are disulfide-bonded. Residues 112–133 form a helical membrane-spanning segment; it reads VVSLLKEVNFYSGILLLACISV. Residues 134-154 lie on the Cytoplasmic side of the membrane; it reads DRYLAIVHATRTLTQKRHLVK. Residues 155 to 174 form a helical membrane-spanning segment; sequence FVCLGCWGLSMNLSLPFFLF. At 175–199 the chain is on the extracellular side; it reads RQAYHPNNSSPVCYEVLGNDTAKWR. Residues 200–220 traverse the membrane as a helical segment; that stretch reads MVLRILPHTFGFIVPLFVMLF. The Cytoplasmic segment spans residues 221 to 242; sequence CYGFTLRTLFKAHMGQKHRAMR. The chain crosses the membrane as a helical span at residues 243 to 264; it reads VIFAVVLIFLLCWLPYNLVLLA. The Extracellular portion of the chain corresponds to 265–285; sequence DTLMRTQVIQESCERRNNIGR. Residues 286-308 traverse the membrane as a helical segment; the sequence is ALDATEILGFLHSCLNPIIYAFI. Topologically, residues 309 to 350 are cytoplasmic; that stretch reads GQNFRHGFLKILAMHGLVSKEFLARHRVTSYTSSSVNVSSNL.

This sequence belongs to the G-protein coupled receptor 1 family. Interacts with IL8. Interacts with GNAI2.

The protein localises to the cell membrane. Receptor to interleukin-8, which is a powerful neutrophils chemotactic factor. Binding of IL-8 to the receptor causes activation of neutrophils. This response is mediated via a G-protein that activates a phosphatidylinositol-calcium second messenger system. The protein is C-X-C chemokine receptor type 1 (CXCR1) of Homo sapiens (Human).